The following is a 154-amino-acid chain: Putative NADPH-dependent 7-cyano-7-deazaguanine reductase (154 aa).

Asp-52 acts as the Proton donor in catalysis. Substrate is bound by residues 67-69 (VES) and 86-87 (HE).

It belongs to the GTP cyclohydrolase I family. QueF type 1 subfamily.

It is found in the cytoplasm. The catalysed reaction is 7-aminomethyl-7-carbaguanine + 2 NADP(+) = 7-cyano-7-deazaguanine + 2 NADPH + 3 H(+). It participates in tRNA modification; tRNA-queuosine biosynthesis. In terms of biological role, catalyzes the NADPH-dependent reduction of 7-cyano-7-deazaguanine (preQ0) to 7-aminomethyl-7-deazaguanine (preQ1). This Streptococcus pneumoniae serotype 4 (strain ATCC BAA-334 / TIGR4) protein is Putative NADPH-dependent 7-cyano-7-deazaguanine reductase.